Consider the following 367-residue polypeptide: tRNA(Ile)-lysidine synthase (367 aa).

Ser-32–Ser-37 is a binding site for ATP.

The protein belongs to the tRNA(Ile)-lysidine synthase family.

Its subcellular location is the cytoplasm. It carries out the reaction cytidine(34) in tRNA(Ile2) + L-lysine + ATP = lysidine(34) in tRNA(Ile2) + AMP + diphosphate + H(+). In terms of biological role, ligates lysine onto the cytidine present at position 34 of the AUA codon-specific tRNA(Ile) that contains the anticodon CAU, in an ATP-dependent manner. Cytidine is converted to lysidine, thus changing the amino acid specificity of the tRNA from methionine to isoleucine. The polypeptide is tRNA(Ile)-lysidine synthase (Hyphomonas neptunium (strain ATCC 15444)).